Consider the following 161-residue polypeptide: Peptidyl-prolyl cis-trans isomerase-like 1 (161 aa).

The 155-residue stretch at 1 to 155 folds into the PPIase cyclophilin-type domain; sequence MATDVVFDTS…DEVKIIRAKV (155 aa).

It belongs to the cyclophilin-type PPIase family. PPIL1 subfamily.

The catalysed reaction is [protein]-peptidylproline (omega=180) = [protein]-peptidylproline (omega=0). In terms of biological role, PPIases accelerate the folding of proteins. It catalyzes the cis-trans isomerization of proline imidic peptide bonds in oligopeptides. This chain is Peptidyl-prolyl cis-trans isomerase-like 1 (cyp1), found in Aspergillus fumigatus (strain ATCC MYA-4609 / CBS 101355 / FGSC A1100 / Af293) (Neosartorya fumigata).